The primary structure comprises 460 residues: Cation efflux system protein CusC (460 aa).

The signal sequence occupies residues 1–17 (MSPCKLLPFCVALALTG). Residue C18 is the site of N-palmitoyl cysteine attachment. A lipid anchor (S-diacylglycerol cysteine) is attached at C18.

The protein belongs to the outer membrane factor (OMF) (TC 1.B.17) family. Homotrimer. Component of the cus efflux system composed of CusA, CusB, CusC and CusF.

Its subcellular location is the cell outer membrane. Forms pores that allow passive diffusion of cations across the outer membrane. Part of a cation efflux system that mediates resistance to copper and silver. The polypeptide is Cation efflux system protein CusC (cusC) (Escherichia coli O157:H7).